The primary structure comprises 331 residues: 6-phosphogluconolactonase (331 aa).

It belongs to the cycloisomerase 2 family.

It catalyses the reaction 6-phospho-D-glucono-1,5-lactone + H2O = 6-phospho-D-gluconate + H(+). It participates in carbohydrate degradation; pentose phosphate pathway; D-ribulose 5-phosphate from D-glucose 6-phosphate (oxidative stage): step 2/3. Functionally, catalyzes the hydrolysis of 6-phosphogluconolactone to 6-phosphogluconate. This chain is 6-phosphogluconolactonase, found in Klebsiella pneumoniae subsp. pneumoniae (strain ATCC 700721 / MGH 78578).